Consider the following 226-residue polypeptide: tRNA (guanine-N(7)-)-methyltransferase (226 aa).

A disordered region spans residues 1 to 21 (MTHPQQPHGPLRSFGRLKSRP). S-adenosyl-L-methionine-binding residues include Glu-59, Glu-84, Asp-111, and Asp-133. Asp-133 is a catalytic residue. Lys-137 serves as a coordination point for substrate. Residues 139 to 144 (RHNKRR) are interaction with RNA. Substrate-binding positions include Asp-169 and 206 to 209 (TRYE).

Belongs to the class I-like SAM-binding methyltransferase superfamily. TrmB family.

The enzyme catalyses guanosine(46) in tRNA + S-adenosyl-L-methionine = N(7)-methylguanosine(46) in tRNA + S-adenosyl-L-homocysteine. The protein operates within tRNA modification; N(7)-methylguanine-tRNA biosynthesis. In terms of biological role, catalyzes the formation of N(7)-methylguanine at position 46 (m7G46) in tRNA. In Caulobacter sp. (strain K31), this protein is tRNA (guanine-N(7)-)-methyltransferase.